The primary structure comprises 51 residues: MHTPIISETVQPKTAGLIVLGKASAETRGLSQGVEPDIGQTYFEESRINQD.

The propeptide occupies 1–28 (MHTPIISETVQPKTAGLIVLGKASAETR). The segment at residues 29–37 (GLSQGVEPD) is a cross-link (isoaspartyl glycine isopeptide (Gly-Asp)).

In terms of processing, this lasso peptide is probably hydrolyzed to a linear form by the isopeptidase AtxE1, in vivo.

Shows weak antimicrobial activity against its phylogenetic relative Caulobacter crescentus. Does not show activity against other bacteria tested (E.coli, Vibrio sp, Burkhoderia thailandensis, and Salmonella newport). The chain is Astexin-1 from Asticcacaulis excentricus (strain ATCC 15261 / DSM 4724 / KCTC 12464 / NCIMB 9791 / VKM B-1370 / CB 48).